A 70-amino-acid chain; its full sequence is ATP synthase subunit c (70 aa).

2 helical membrane passes run 4-24 (IAAA…NGLI) and 47-67 (FIGI…SFIV).

Belongs to the ATPase C chain family. In terms of assembly, F-type ATPases have 2 components, F(1) - the catalytic core - and F(0) - the membrane proton channel. F(1) has five subunits: alpha(3), beta(3), gamma(1), delta(1), epsilon(1). F(0) has three main subunits: a(1), b(2) and c(10-14). The alpha and beta chains form an alternating ring which encloses part of the gamma chain. F(1) is attached to F(0) by a central stalk formed by the gamma and epsilon chains, while a peripheral stalk is formed by the delta and b chains.

Its subcellular location is the cell membrane. In terms of biological role, f(1)F(0) ATP synthase produces ATP from ADP in the presence of a proton or sodium gradient. F-type ATPases consist of two structural domains, F(1) containing the extramembraneous catalytic core and F(0) containing the membrane proton channel, linked together by a central stalk and a peripheral stalk. During catalysis, ATP synthesis in the catalytic domain of F(1) is coupled via a rotary mechanism of the central stalk subunits to proton translocation. Functionally, key component of the F(0) channel; it plays a direct role in translocation across the membrane. A homomeric c-ring of between 10-14 subunits forms the central stalk rotor element with the F(1) delta and epsilon subunits. In Staphylococcus carnosus (strain TM300), this protein is ATP synthase subunit c.